Reading from the N-terminus, the 138-residue chain is Small ribosomal subunit protein uS12 (138 aa).

Residue Asp-89 is modified to 3-methylthioaspartic acid. The segment at 101 to 138 (ALDTAGTQNRNQGRSKYGTKRPKKGAATAAKGPVKGKK) is disordered. Residues 105 to 114 (AGTQNRNQGR) show a composition bias toward polar residues. Residues 125-138 (GAATAAKGPVKGKK) are compositionally biased toward low complexity.

It belongs to the universal ribosomal protein uS12 family. As to quaternary structure, part of the 30S ribosomal subunit. Contacts proteins S8 and S17. May interact with IF1 in the 30S initiation complex.

With S4 and S5 plays an important role in translational accuracy. Functionally, interacts with and stabilizes bases of the 16S rRNA that are involved in tRNA selection in the A site and with the mRNA backbone. Located at the interface of the 30S and 50S subunits, it traverses the body of the 30S subunit contacting proteins on the other side and probably holding the rRNA structure together. The combined cluster of proteins S8, S12 and S17 appears to hold together the shoulder and platform of the 30S subunit. The polypeptide is Small ribosomal subunit protein uS12 (Heliobacterium modesticaldum (strain ATCC 51547 / Ice1)).